A 201-amino-acid polypeptide reads, in one-letter code: Imidazoleglycerol-phosphate dehydratase (201 aa).

This sequence belongs to the imidazoleglycerol-phosphate dehydratase family.

It localises to the cytoplasm. It carries out the reaction D-erythro-1-(imidazol-4-yl)glycerol 3-phosphate = 3-(imidazol-4-yl)-2-oxopropyl phosphate + H2O. It participates in amino-acid biosynthesis; L-histidine biosynthesis; L-histidine from 5-phospho-alpha-D-ribose 1-diphosphate: step 6/9. The chain is Imidazoleglycerol-phosphate dehydratase from Methanopyrus kandleri (strain AV19 / DSM 6324 / JCM 9639 / NBRC 100938).